Consider the following 637-residue polypeptide: Biosynthetic arginine decarboxylase (637 aa).

Residue Lys101 is modified to N6-(pyridoxal phosphate)lysine. 286–296 (VDIGGGLGVDY) lines the substrate pocket.

Belongs to the Orn/Lys/Arg decarboxylase class-II family. SpeA subfamily. Mg(2+) serves as cofactor. The cofactor is pyridoxal 5'-phosphate.

The catalysed reaction is L-arginine + H(+) = agmatine + CO2. The protein operates within amine and polyamine biosynthesis; agmatine biosynthesis; agmatine from L-arginine: step 1/1. In terms of biological role, catalyzes the biosynthesis of agmatine from arginine. This chain is Biosynthetic arginine decarboxylase, found in Marinobacter nauticus (strain ATCC 700491 / DSM 11845 / VT8) (Marinobacter aquaeolei).